A 448-amino-acid chain; its full sequence is tRNA modification GTPase MnmE (448 aa).

The (6S)-5-formyl-5,6,7,8-tetrahydrofolate site is built by R21, E80, and K119. Residues 215-370 enclose the TrmE-type G domain; sequence GVKLAIVGRP…LSEEILKKVG (156 aa). Residue N225 participates in K(+) binding. Residues 225–230, 244–250, and 269–272 each bind GTP; these read NVGKSS, TDIAGTT, and DTAG. Mg(2+) is bound at residue S229. The K(+) site is built by T244, I246, and T249. T250 serves as a coordination point for Mg(2+). Residue K448 participates in (6S)-5-formyl-5,6,7,8-tetrahydrofolate binding.

The protein belongs to the TRAFAC class TrmE-Era-EngA-EngB-Septin-like GTPase superfamily. TrmE GTPase family. Homodimer. Heterotetramer of two MnmE and two MnmG subunits. K(+) is required as a cofactor.

Its subcellular location is the cytoplasm. In terms of biological role, exhibits a very high intrinsic GTPase hydrolysis rate. Involved in the addition of a carboxymethylaminomethyl (cmnm) group at the wobble position (U34) of certain tRNAs, forming tRNA-cmnm(5)s(2)U34. This Aquifex aeolicus (strain VF5) protein is tRNA modification GTPase MnmE.